We begin with the raw amino-acid sequence, 148 residues long: Wound-induced proteinase inhibitor 2 (148 aa).

A signal peptide spans 1–25; it reads MAVHKEVNFVAYLLIVLGMFLYVDA. A 1; trypsin-inhibitory repeat occupies 26–81; that stretch reads KACTRECGNLGFGICPRSEGSPLNPICINCCSGYKGCNYYNSFGKFICEGESDPKR. Intrachain disulfides connect Cys-28–Cys-116, Cys-32–Cys-112, Cys-40–Cys-122, Cys-52–Cys-89, Cys-55–Cys-73, Cys-56–Cys-85, Cys-62–Cys-98, and Cys-115–Cys-133. One copy of the 2; chymotrypsin-inhibitory repeat lies at 83–141; it reads NACTFNCDPNIAYSRCPRSQGKSLIYPTGCTTCCTGYKGCYYFGKDGKFVCEGESDEPK.

It belongs to the protease inhibitor I20 (potato type II proteinase inhibitor) family.

Its subcellular location is the secreted. In terms of biological role, potent inhibitor of both trypsin and chymotrypsin. This is Wound-induced proteinase inhibitor 2 from Solanum lycopersicum (Tomato).